The sequence spans 123 residues: Histone H2B (123 aa).

The disordered stretch occupies residues 1-30; the sequence is MPPKTSGKAAKKAGKAQKNITKTDKKKKRR. At proline 2 the chain carries N-methylproline; partial. At lysine 44 the chain carries N6-succinyllysine. O-linked (GlcNAc) serine glycosylation occurs at serine 110. N6-succinyllysine occurs at positions 114 and 118. Residue lysine 118 forms a Glycyl lysine isopeptide (Lys-Gly) (interchain with G-Cter in ubiquitin) linkage.

This sequence belongs to the histone H2B family. As to quaternary structure, the nucleosome is a histone octamer containing two molecules each of H2A, H2B, H3 and H4 assembled in one H3-H4 heterotetramer and two H2A-H2B heterodimers. The octamer wraps approximately 147 bp of DNA. Phosphorylated by the catalytic component of the Dbf4-dependent kinase (DDK) complex Cdc7. In terms of processing, monoubiquitination of Lys-118 by Bre1 gives a specific tag for epigenetic transcriptional activation and is also prerequisite for histone H3 'Lys-4' and 'Lys-79' methylation. Deubiquitination of Lys-118 by the SAGA complex is involved in activating transcription of a large subset of genes. Post-translationally, methylation at Pro-2 increases upon heat shock. GlcNAcylation at Ser-110 promotes monoubiquitination of Lys-118. It fluctuates in response to extracellular glucose, and associates with transcribed genes.

The protein resides in the nucleus. It is found in the chromosome. Core component of nucleosome. Nucleosomes wrap and compact DNA into chromatin, limiting DNA accessibility to the cellular machineries which require DNA as a template. Histones thereby play a central role in transcription regulation, DNA repair, DNA replication and chromosomal stability. DNA accessibility is regulated via a complex set of post-translational modifications of histones, also called histone code, and nucleosome remodeling. In Drosophila yakuba (Fruit fly), this protein is Histone H2B (His2B).